The sequence spans 269 residues: ATP synthase subunit delta (269 aa).

It belongs to the ATPase delta chain family. In terms of assembly, F-type ATPases have 2 components, F(1) - the catalytic core - and F(0) - the membrane proton channel. F(1) has five subunits: alpha(3), beta(3), gamma(1), delta(1), epsilon(1). F(0) has three main subunits: a(1), b(2) and c(10-14). The alpha and beta chains form an alternating ring which encloses part of the gamma chain. F(1) is attached to F(0) by a central stalk formed by the gamma and epsilon chains, while a peripheral stalk is formed by the delta and b chains.

The protein localises to the cell membrane. Functionally, f(1)F(0) ATP synthase produces ATP from ADP in the presence of a proton or sodium gradient. F-type ATPases consist of two structural domains, F(1) containing the extramembraneous catalytic core and F(0) containing the membrane proton channel, linked together by a central stalk and a peripheral stalk. During catalysis, ATP synthesis in the catalytic domain of F(1) is coupled via a rotary mechanism of the central stalk subunits to proton translocation. In terms of biological role, this protein is part of the stalk that links CF(0) to CF(1). It either transmits conformational changes from CF(0) to CF(1) or is implicated in proton conduction. The chain is ATP synthase subunit delta from Thermobifida fusca (strain YX).